Consider the following 282-residue polypeptide: Pantothenate synthetase (282 aa).

30 to 37 serves as a coordination point for ATP; that stretch reads MGALHAGH. His37 functions as the Proton donor in the catalytic mechanism. Residue Gln61 coordinates (R)-pantoate. Gln61 serves as a coordination point for beta-alanine. 147 to 150 is a binding site for ATP; sequence GEKD. Residue Gln153 coordinates (R)-pantoate. ATP contacts are provided by residues Val176 and 184–187; that span reads LSSR.

It belongs to the pantothenate synthetase family. Homodimer.

The protein resides in the cytoplasm. The catalysed reaction is (R)-pantoate + beta-alanine + ATP = (R)-pantothenate + AMP + diphosphate + H(+). It functions in the pathway cofactor biosynthesis; (R)-pantothenate biosynthesis; (R)-pantothenate from (R)-pantoate and beta-alanine: step 1/1. In terms of biological role, catalyzes the condensation of pantoate with beta-alanine in an ATP-dependent reaction via a pantoyl-adenylate intermediate. The protein is Pantothenate synthetase of Bacteroides thetaiotaomicron (strain ATCC 29148 / DSM 2079 / JCM 5827 / CCUG 10774 / NCTC 10582 / VPI-5482 / E50).